The sequence spans 423 residues: MVMMFIGIDDTDSPNKYCTTYIATLLIEELKGCGYSVDMPKLIRMNPMVKYKTRGNGGVAIHILDELYSKDKEEIKNITISLVEKYTDFECENTNPGIVFLDEAKYKENREKLTNYYKKVLYDIVSVDYAEKFILKVGGEFIKYKLGRGIIGALGAISSTPPYTYELLAYRKKEMWGKKREIDEKSVIEMDKETFPYTFDNYDYENEKILIAPNTPCPVLFGIRGIDAEILLKAMHKIEGEKPERFMIFKTNHGTDVHLRKMNIKDIYPNTGVIVYGRVVEEPRDIEGGHVIFKLSDGTGEIDCMAYEPTKGFRDIIRKLIVGDYIAVYGTVREKPLGINIEKIKILKLEKKFVKDKRCPYCGGTLKAKGKKAGYKCKKCKKTIAYDEIKMIEVERDLKTGFYEVPGSARRHLSKPIQLIDLI.

A DNA-binding region (OB) is located at residues 273–347; that stretch reads VIVYGRVVEE…GINIEKIKIL (75 aa).

Belongs to the TiaS family.

It localises to the cytoplasm. It carries out the reaction cytidine(34) in tRNA(Ile2) + agmatine + ATP + H2O = 2-agmatinylcytidine(34) in tRNA(Ile2) + AMP + 2 phosphate + 2 H(+). Functionally, ATP-dependent agmatine transferase that catalyzes the formation of 2-agmatinylcytidine (agm2C) at the wobble position (C34) of tRNA(Ile2), converting the codon specificity from AUG to AUA. This chain is tRNA(Ile2) 2-agmatinylcytidine synthetase TiaS, found in Methanocaldococcus jannaschii (strain ATCC 43067 / DSM 2661 / JAL-1 / JCM 10045 / NBRC 100440) (Methanococcus jannaschii).